Here is a 139-residue protein sequence, read N- to C-terminus: ATP synthase epsilon chain (139 aa).

It belongs to the ATPase epsilon chain family. In terms of assembly, F-type ATPases have 2 components, CF(1) - the catalytic core - and CF(0) - the membrane proton channel. CF(1) has five subunits: alpha(3), beta(3), gamma(1), delta(1), epsilon(1). CF(0) has three main subunits: a, b and c.

Its subcellular location is the cell inner membrane. Its function is as follows. Produces ATP from ADP in the presence of a proton gradient across the membrane. This Haemophilus ducreyi (strain 35000HP / ATCC 700724) protein is ATP synthase epsilon chain.